The primary structure comprises 132 residues: Large ribosomal subunit protein bL12 (132 aa).

It belongs to the bacterial ribosomal protein bL12 family. Homodimer. Part of the ribosomal stalk of the 50S ribosomal subunit. Forms a multimeric L10(L12)X complex, where L10 forms an elongated spine to which 2 to 4 L12 dimers bind in a sequential fashion. Binds GTP-bound translation factors.

Forms part of the ribosomal stalk which helps the ribosome interact with GTP-bound translation factors. Is thus essential for accurate translation. In Chloroflexus aggregans (strain MD-66 / DSM 9485), this protein is Large ribosomal subunit protein bL12.